Here is a 993-residue protein sequence, read N- to C-terminus: NACHT, LRR and PYD domains-containing protein 14 (993 aa).

In terms of domain architecture, NACHT spans 81-403 (QTVVLQGAAG…FYLLRENLEE (323 aa)). 87–94 (GAAGIGKT) contacts ATP. 9 LRR repeats span residues 636–657 (DLKE…LKCK), 660–680 (KLRV…QKLS), 688–708 (SLVF…KSLC), 717–738 (SLER…VLSS), 745–765 (RLTH…KLLS), 774–795 (TLQS…HLST), 802–822 (SLVH…KLLC), 831–852 (NLQE…DLAS), and 859–879 (NLWS…NILC).

It belongs to the NLRP family. As to expression, detected in adult ovary and testis. Detected in oocytes and in germ cell elements in seminiferous tubules in adult testis (at protein level).

The protein resides in the cytoplasm. In terms of biological role, may be involved in inflammation and spermatogenesis. The polypeptide is NACHT, LRR and PYD domains-containing protein 14 (Nlrp14) (Mus musculus (Mouse)).